Here is a 436-residue protein sequence, read N- to C-terminus: Serine--tRNA ligase (436 aa).

Position 242–244 (242–244 (TAE)) interacts with L-serine. Position 273–275 (273–275 (RSE)) interacts with ATP. Residue glutamate 296 coordinates L-serine. 360 to 363 (EISS) is an ATP binding site. An L-serine-binding site is contributed by serine 395.

Belongs to the class-II aminoacyl-tRNA synthetase family. Type-1 seryl-tRNA synthetase subfamily. Homodimer. The tRNA molecule binds across the dimer.

The protein resides in the cytoplasm. The enzyme catalyses tRNA(Ser) + L-serine + ATP = L-seryl-tRNA(Ser) + AMP + diphosphate + H(+). The catalysed reaction is tRNA(Sec) + L-serine + ATP = L-seryl-tRNA(Sec) + AMP + diphosphate + H(+). It functions in the pathway aminoacyl-tRNA biosynthesis; selenocysteinyl-tRNA(Sec) biosynthesis; L-seryl-tRNA(Sec) from L-serine and tRNA(Sec): step 1/1. Its function is as follows. Catalyzes the attachment of serine to tRNA(Ser). Is also able to aminoacylate tRNA(Sec) with serine, to form the misacylated tRNA L-seryl-tRNA(Sec), which will be further converted into selenocysteinyl-tRNA(Sec). The sequence is that of Serine--tRNA ligase from Polynucleobacter necessarius subsp. necessarius (strain STIR1).